The sequence spans 85 residues: Anti-neuroexcitation peptide 3 (85 aa).

The N-terminal stretch at 1 to 21 (MKLSLLLVISASMLIDGLVNA) is a signal peptide. The LCN-type CS-alpha/beta domain maps to 22–82 (DGYIRGSNGC…TWKSESNTCG (61 aa)). Intrachain disulfides connect Cys31–Cys81, Cys35–Cys56, Cys42–Cys63, and Cys46–Cys65.

This sequence belongs to the long (4 C-C) scorpion toxin superfamily. Sodium channel inhibitor family. Beta subfamily. As to expression, expressed by the venom gland.

Its subcellular location is the secreted. In terms of biological role, binds to sodium channels (Nav) and inhibits them. Recombinant ANEP delays the convulsion seizure of model animals by 18% and shows anti-neuroexcitatory activity. The sequence is that of Anti-neuroexcitation peptide 3 from Olivierus martensii (Manchurian scorpion).